Here is a 749-residue protein sequence, read N- to C-terminus: Tryptophan 2-monooxygenase (749 aa).

Residues Ser-232, Glu-252, Lys-260, and Arg-280 each contribute to the FMN site. Arg-280 provides a ligand contact to substrate.

This sequence belongs to the tryptophan 2-monooxygenase family. Requires FMN as cofactor.

It carries out the reaction L-tryptophan + O2 = indole-3-acetamide + CO2 + H2O. Its pathway is plant hormone metabolism; auxin biosynthesis. The chain is Tryptophan 2-monooxygenase (aux1) from Rhizobium rhizogenes (Agrobacterium rhizogenes).